The primary structure comprises 957 residues: Glycine dehydrogenase (decarboxylating) 2 (957 aa).

Position 707 is an N6-(pyridoxal phosphate)lysine (lysine 707).

This sequence belongs to the GcvP family. The glycine cleavage system is composed of four proteins: P, T, L and H. It depends on pyridoxal 5'-phosphate as a cofactor.

The enzyme catalyses N(6)-[(R)-lipoyl]-L-lysyl-[glycine-cleavage complex H protein] + glycine + H(+) = N(6)-[(R)-S(8)-aminomethyldihydrolipoyl]-L-lysyl-[glycine-cleavage complex H protein] + CO2. In terms of biological role, the glycine cleavage system catalyzes the degradation of glycine. The P protein binds the alpha-amino group of glycine through its pyridoxal phosphate cofactor; CO(2) is released and the remaining methylamine moiety is then transferred to the lipoamide cofactor of the H protein. This Pseudomonas fluorescens (strain ATCC BAA-477 / NRRL B-23932 / Pf-5) protein is Glycine dehydrogenase (decarboxylating) 2.